The sequence spans 209 residues: Kynurenine formamidase (209 aa).

Phenylalanine 18 lines the substrate pocket. Zn(2+) is bound by residues histidine 48, histidine 52, and aspartate 54. Histidine 58 acts as the Proton donor/acceptor in catalysis. The Zn(2+) site is built by histidine 160 and glutamate 172.

The protein belongs to the Cyclase 1 superfamily. KynB family. As to quaternary structure, homodimer. Zn(2+) serves as cofactor.

The enzyme catalyses N-formyl-L-kynurenine + H2O = L-kynurenine + formate + H(+). It participates in amino-acid degradation; L-tryptophan degradation via kynurenine pathway; L-kynurenine from L-tryptophan: step 2/2. Catalyzes the hydrolysis of N-formyl-L-kynurenine to L-kynurenine, the second step in the kynurenine pathway of tryptophan degradation. This chain is Kynurenine formamidase, found in Bordetella bronchiseptica (strain ATCC BAA-588 / NCTC 13252 / RB50) (Alcaligenes bronchisepticus).